Reading from the N-terminus, the 385-residue chain is Phosphotransferase FrzJ (385 aa).

Positions 38 and 59 each coordinate ATP. Residue aspartate 245 is part of the active site.

The protein belongs to the methylthioribose kinase family. As to quaternary structure, monomer.

It carries out the reaction (1S,3S,6S,7S,8S,9S)-6-[(4-methoxyphenyl)methyl]-3-(methylamino)-5-azatricyclo[6.3.1.0(1,5)]dodecane-7,9-diol + ATP = (-)-FR901483 + ADP + 2 H(+). It functions in the pathway secondary metabolite biosynthesis. Phosphotransferase; part of the gene cluster that mediates the biosynthesis of the alkaloid (-)-FR901483, a potent immunosuppressant that shows efficacy in animal models and a probable inhibitor of purine nucleotide biosynthesis by targeting phosphoribosylpyrophosphate amidotransferase (PPAT). FrzJ catalyzes the last step of the pathway by phosphorylating the C4'-OH of dephospho-(-)-FR901483 to produce (-)-FR901483. The biosynthesis of (-)-FR901483 starts with the condensation of two L-tyrosines to yield (S,S)-dityrosyl-piperazine. This process occurs in 3 steps with the non-canonical nonribosomal peptide synthetase FrzA catalyzing the reduction of L-tyrosine into L-tyrosinal, the spontaneous condensation of 2 L-tyrosinal units, and the subsequent reduction by the NmrA-like family domain-containing oxidoreductase FrzB. The cytochrome P450 monooxygenase FrzC then performs coupling between N10 and C1' to morph the piperazine into a 1,4-diazabicyclo[3.2.1]octane spiro-fused to a 2,5-cyclohexadienone. The dienone portion is further reduced to cyclohexanone by the flavin-dependent reductase FrzD. The methyltranserases (MTs) FrzE and FrzF are then involved in the methylation at the C10' amine and the C4 phenolic oxygen, respectively. The order of the two MTs appear to be interchangeable. Cleavage of the C9-N10' bond by the dioxygenase FrzG then leads to formation of a conjugated iminium. In addition to the oxidation of C9, an additional dehydrogenation between C7 and C8 can occur to give a likely shunt product. The next biosynthetic step is the intramolecular aldol condensation catalyzed by the newly identified aldolase FrzH to yield an aza-tricyclic product with the formation of a C9-C3' bond. The short-chain dehydrogenase/reductase FrzI then produces dephospho-(-)-FR901483 that is phosphorylated at C4'-OH into (-)-FR901483 by the phosphotransferase FrzJ. The polypeptide is Phosphotransferase FrzJ (Cladobotryum sp).